The chain runs to 375 residues: Chaperone protein DnaJ (375 aa).

A J domain is found at 5–70; sequence DYYEILGVSK…QKRAAYDQYG (66 aa). The CR-type zinc finger occupies 130–208; it reads GVTKEIRIPT…CHGHGRVEKS (79 aa). Residues cysteine 143, cysteine 146, cysteine 160, cysteine 163, cysteine 182, cysteine 185, cysteine 196, and cysteine 199 each coordinate Zn(2+). CXXCXGXG motif repeat units follow at residues 143–150, 160–167, 182–189, and 196–203; these read CDVCHGSG, CPTCHGSG, CPHCQGRG, and CHKCHGHG.

Belongs to the DnaJ family. Homodimer. Requires Zn(2+) as cofactor.

It is found in the cytoplasm. Its function is as follows. Participates actively in the response to hyperosmotic and heat shock by preventing the aggregation of stress-denatured proteins and by disaggregating proteins, also in an autonomous, DnaK-independent fashion. Unfolded proteins bind initially to DnaJ; upon interaction with the DnaJ-bound protein, DnaK hydrolyzes its bound ATP, resulting in the formation of a stable complex. GrpE releases ADP from DnaK; ATP binding to DnaK triggers the release of the substrate protein, thus completing the reaction cycle. Several rounds of ATP-dependent interactions between DnaJ, DnaK and GrpE are required for fully efficient folding. Also involved, together with DnaK and GrpE, in the DNA replication of plasmids through activation of initiation proteins. The protein is Chaperone protein DnaJ of Salmonella paratyphi A (strain ATCC 9150 / SARB42).